We begin with the raw amino-acid sequence, 467 residues long: MSKFPTVSEILSGKVAVGEEVAVRGWVRTRRDSKAGLSFLAVYDGSCFDPLQSIINNDLANYNDEVLRLTAGCSVIVTGKVVESPAEGQAVELHATHVEVVGWVEDPDTYPMAAKRHSIEYLREVAHLRPRTNLIGAVARVRHCLAQAIHRFFNEQGFYWVATPLITASDTEGAGEMFRVSTLDLESLPRTDEGKVDFSQDFFGKESFLTVSGQLNGETYACALSKVYTFGPTFRAENSNTTRHLAEFWMVEPEFAFATLADNAKLAEDMLKYVFKAVLEERKDDMQFFAKHIDKDVITRLENFIASPFAQVDYTDAIEILLKSGKEFEFPVSWGIDLSSEHERFLAEEYFKSPVVVKNYPKDIKAFYMRLNDDGKTVAAMDVLAPGIGEIIGGSQREERLDVLDTRMVEMGLNPEDYWWYRDLRKYGTVPHSGFGLGFERLIVYVTGLQNIREVIPFPRAPRNANF.

The protein belongs to the class-II aminoacyl-tRNA synthetase family. Homodimer.

It is found in the cytoplasm. The catalysed reaction is tRNA(Asn) + L-asparagine + ATP = L-asparaginyl-tRNA(Asn) + AMP + diphosphate + H(+). The protein is Asparagine--tRNA ligase of Actinobacillus pleuropneumoniae serotype 3 (strain JL03).